Here is a 160-residue protein sequence, read N- to C-terminus: Phosphopantetheine adenylyltransferase (160 aa).

Thr-11 lines the substrate pocket. ATP contacts are provided by residues 11–12 (TF) and His-19. Lys-43, Thr-75, and Arg-89 together coordinate substrate. Residues 90–92 (GLR), Glu-100, and 125–131 (YSFLSSS) each bind ATP.

It belongs to the bacterial CoaD family. As to quaternary structure, homohexamer. Mg(2+) is required as a cofactor.

The protein resides in the cytoplasm. It catalyses the reaction (R)-4'-phosphopantetheine + ATP + H(+) = 3'-dephospho-CoA + diphosphate. It functions in the pathway cofactor biosynthesis; coenzyme A biosynthesis; CoA from (R)-pantothenate: step 4/5. Its function is as follows. Reversibly transfers an adenylyl group from ATP to 4'-phosphopantetheine, yielding dephospho-CoA (dPCoA) and pyrophosphate. The polypeptide is Phosphopantetheine adenylyltransferase (Listeria monocytogenes serotype 4b (strain CLIP80459)).